We begin with the raw amino-acid sequence, 123 residues long: uncharacterized protein (123 aa).

A signal peptide spans 1 to 24 (MLPLCLTFLSFFLSLGGSFKAVMT). 2 helical membrane passes run 39–59 (FWIFNWTVTLIPLNSLVALAI) and 101–121 (FGGILTIDLSFYWALGVALTG).

It localises to the membrane. This is an uncharacterized protein from Saccharomyces cerevisiae (strain ATCC 204508 / S288c) (Baker's yeast).